The primary structure comprises 515 residues: Protein pid-4 (515 aa).

Residues 496-515 (DRSPQKFKFPASGSYMKPAN) form a disordered region.

In terms of assembly, may interact with pid-2, app-1 and prmt-5.

It localises to the cytoplasm. Its subcellular location is the perinuclear region. It is found in the P-body. Together with pid-5, it is involved in gene silencing mediated by a class of 21 nucleotide PIWI-interacting RNAs (piRNAs) that possess a uracil residue at the 5'-end (also called 21U-RNAs) and guide the Piwi protein prg-1 to its DNA targets for silencing. Together with pid-5, it is required for the biogenesis of secondary and tertiary 22G-siRNAs. Specifically, promotes the production of 22G-siRNAs from the 5' end of target mRNAs. Together with pid-5, plays a role in small RNA-directed transgenerational epigenetic inheritance (also called RNAe) over several generations and germline immortality. Together with pid-5, plays a role in the formation of liquid-like condensates in the cytoplasm called Z granules. The protein is Protein pid-4 of Caenorhabditis elegans.